Consider the following 62-residue polypeptide: Phyllokinin-1 (62 aa).

Residues 1–19 form the signal peptide; sequence MSFLKKSLFLVLFLGLVSS. A propeptide spanning residues 20–48 is cleaved from the precursor; the sequence is SICEEEKRETEEEENEDEIEEESEEKKRE. Residues 22–62 are disordered; the sequence is CEEEKRETEEEENEDEIEEESEEKKREDPERPPGFTPFRVY. Residues 30 to 42 are compositionally biased toward acidic residues; that stretch reads EEEENEDEIEEES. Residues 43–52 show a composition bias toward basic and acidic residues; that stretch reads EEKKREDPER. At Tyr62 the chain carries Sulfotyrosine; partial.

This sequence belongs to the frog skin active peptide (FSAP) family. Bradykinin-related peptide subfamily. In terms of processing, asp,Pro,Glu-[Thr6,Val10]-phyllokinin and [Thr6,Val10]-phyllokinin occur in sulfated and nonsulfated forms. [Thr6]-bradykinin and Des-Arg-[Thr6]-bradykinin are nonsulfated. In terms of tissue distribution, expressed by the skin glands.

The protein localises to the secreted. Its function is as follows. Inhibits ACE with a Ki of 1.6 uM, and targets B2 bradykinin receptor (BDKRB2). Provokes contraction of smooth muscle preparation (ileum). In vivo, induces an early hyperalgesic effects in living rats after intraplantar injection. This chain is Phyllokinin-1, found in Pithecopus azureus (Orange-legged monkey tree frog).